The primary structure comprises 202 residues: MNHLIIFAHPNSVRSFGRAIANRIEQISQENGVNVFFRDLYEMNFNPILSHEELQNANNGIIPEDIQQEHDFILQADLITLVYPLWWMGFPAILKGYLDRVLSHGFAYKTENGESVGLLKNKQMQQFITIGSNVDKYKEFGVDKSLNHCLINGLFNYCGIENVEFELFGDIHLIDDKARKAMIELAAQKTQAKLTALLKEKE.

This sequence belongs to the NAD(P)H dehydrogenase (quinone) family.

This is an uncharacterized protein from Haemophilus influenzae (strain ATCC 51907 / DSM 11121 / KW20 / Rd).